A 194-amino-acid chain; its full sequence is Outer-membrane lipoprotein LolB (194 aa).

Positions 1–18 (MKLLQHLTLIFCLLILTA) are cleaved as a signal peptide. The N-palmitoyl cysteine moiety is linked to residue C19. Residue C19 is the site of S-diacylglycerol cysteine attachment.

This sequence belongs to the LolB family. Monomer.

Its subcellular location is the cell outer membrane. In terms of biological role, plays a critical role in the incorporation of lipoproteins in the outer membrane after they are released by the LolA protein. In Tolumonas auensis (strain DSM 9187 / NBRC 110442 / TA 4), this protein is Outer-membrane lipoprotein LolB.